The chain runs to 84 residues: Large ribosomal subunit protein bL27 (84 aa).

The disordered stretch occupies residues 1-25 (MAHKKAGGSSKNGRDSAGKRLGVKR).

The protein belongs to the bacterial ribosomal protein bL27 family.

The protein is Large ribosomal subunit protein bL27 of Syntrophotalea carbinolica (strain DSM 2380 / NBRC 103641 / GraBd1) (Pelobacter carbinolicus).